Here is a 204-residue protein sequence, read N- to C-terminus: Probable UbiX-like flavin prenyltransferase (204 aa).

FMN contacts are provided by residues 21–23 (GAT), Ser47, 98–101 (SMKS), and Arg133.

Belongs to the UbiX/PAD1 family. YclB subfamily. In terms of assembly, homododecamer.

It catalyses the reaction dimethylallyl phosphate + FMNH2 = prenylated FMNH2 + phosphate. Functionally, involved in the non-oxidative decarboxylation and detoxification of phenolic derivatives under both aerobic and anaerobic conditions. Flavin prenyltransferase that catalyzes the synthesis of the prenylated FMN cofactor (prenyl-FMN) for phenolic acid decarboxylase. The polypeptide is Probable UbiX-like flavin prenyltransferase (Bacillus subtilis (strain 168)).